Here is a 103-residue protein sequence, read N- to C-terminus: Histone H4 (103 aa).

A compositionally biased stretch (gly residues) spans 1-14 (MSGRGKGGKGLGKG). Residues 1–20 (MSGRGKGGKGLGKGGAKRHR) form a disordered region. The DNA-binding element occupies 17 to 21 (KRHRK).

The protein belongs to the histone H4 family. The nucleosome is a histone octamer containing two molecules each of H2A, H2B, H3 and H4 assembled in one H3-H4 heterotetramer and two H2A-H2B heterodimers. The octamer wraps approximately 147 bp of DNA.

It localises to the nucleus. It is found in the chromosome. Functionally, core component of nucleosome. Nucleosomes wrap and compact DNA into chromatin, limiting DNA accessibility to the cellular machineries which require DNA as a template. Histones thereby play a central role in transcription regulation, DNA repair, DNA replication and chromosomal stability. DNA accessibility is regulated via a complex set of post-translational modifications of histones, also called histone code, and nucleosome remodeling. The polypeptide is Histone H4 (H41) (Physarum polycephalum (Slime mold)).